A 628-amino-acid chain; its full sequence is DNA-directed RNA polymerase subunit beta' (628 aa).

4 residues coordinate Zn(2+): cysteine 70, cysteine 72, cysteine 85, and cysteine 88. Positions 472, 474, and 476 each coordinate Mg(2+).

Belongs to the RNA polymerase beta' chain family. RpoC1 subfamily. In plastids the minimal PEP RNA polymerase catalytic core is composed of four subunits: alpha, beta, beta', and beta''. When a (nuclear-encoded) sigma factor is associated with the core the holoenzyme is formed, which can initiate transcription. The cofactor is Mg(2+). Requires Zn(2+) as cofactor.

It localises to the plastid. The protein localises to the chloroplast. It carries out the reaction RNA(n) + a ribonucleoside 5'-triphosphate = RNA(n+1) + diphosphate. DNA-dependent RNA polymerase catalyzes the transcription of DNA into RNA using the four ribonucleoside triphosphates as substrates. This chain is DNA-directed RNA polymerase subunit beta', found in Gracilaria tenuistipitata var. liui (Red alga).